The following is a 395-amino-acid chain: Sulfate adenylyltransferase (395 aa).

Belongs to the sulfate adenylyltransferase family.

The enzyme catalyses sulfate + ATP + H(+) = adenosine 5'-phosphosulfate + diphosphate. It participates in sulfur metabolism; hydrogen sulfide biosynthesis; sulfite from sulfate: step 1/3. This Synechococcus elongatus (strain ATCC 33912 / PCC 7942 / FACHB-805) (Anacystis nidulans R2) protein is Sulfate adenylyltransferase.